Here is a 268-residue protein sequence, read N- to C-terminus: Small ribosomal subunit protein eS1 (268 aa).

Residues 1 to 21 (MAVGKNKGLSKGGKKGGKKKV) are disordered.

The protein belongs to the eukaryotic ribosomal protein eS1 family. In terms of assembly, component of the small ribosomal subunit. Mature ribosomes consist of a small (40S) and a large (60S) subunit. The 40S subunit contains about 33 different proteins and 1 molecule of RNA (18S). The 60S subunit contains about 49 different proteins and 3 molecules of RNA (28S, 5.8S and 5S).

The protein resides in the cytoplasm. Functionally, essential for oogenesis; required for late follicle cell development. This is Small ribosomal subunit protein eS1 from Drosophila willistoni (Fruit fly).